The primary structure comprises 158 residues: S-ribosylhomocysteine lyase (158 aa).

Fe cation contacts are provided by histidine 54, histidine 58, and cysteine 124.

It belongs to the LuxS family. Homodimer. Fe cation serves as cofactor.

It carries out the reaction S-(5-deoxy-D-ribos-5-yl)-L-homocysteine = (S)-4,5-dihydroxypentane-2,3-dione + L-homocysteine. Functionally, involved in the synthesis of autoinducer 2 (AI-2) which is secreted by bacteria and is used to communicate both the cell density and the metabolic potential of the environment. The regulation of gene expression in response to changes in cell density is called quorum sensing. Catalyzes the transformation of S-ribosylhomocysteine (RHC) to homocysteine (HC) and 4,5-dihydroxy-2,3-pentadione (DPD). This Limosilactobacillus reuteri (strain DSM 20016) (Lactobacillus reuteri) protein is S-ribosylhomocysteine lyase.